The following is a 361-amino-acid chain: Probable S-adenosylmethionine-dependent methyltransferase At5g38780 (361 aa).

Residues tyrosine 19, cysteine 64, asparagine 69, aspartate 106, leucine 107, serine 135, and phenylalanine 136 each coordinate S-adenosyl-L-homocysteine. Positions 174, 260, 262, and 263 each coordinate Mg(2+).

Belongs to the methyltransferase superfamily. Type-7 methyltransferase family. In terms of assembly, homodimer. Mg(2+) serves as cofactor.

This is Probable S-adenosylmethionine-dependent methyltransferase At5g38780 from Arabidopsis thaliana (Mouse-ear cress).